The following is a 91-amino-acid chain: Small ribosomal subunit protein uS19 (91 aa).

The protein belongs to the universal ribosomal protein uS19 family.

Functionally, protein S19 forms a complex with S13 that binds strongly to the 16S ribosomal RNA. This Prochlorococcus marinus (strain MIT 9211) protein is Small ribosomal subunit protein uS19.